The sequence spans 644 residues: Exoribonuclease 2 (644 aa).

The RNB domain occupies 189 to 516; sequence REDLTALNFV…NHRLLKAVIT (328 aa). Residues 561-643 enclose the S1 motif domain; sequence DIRFNAEIID…ETRGIVAKPA (83 aa).

This sequence belongs to the RNR ribonuclease family. RNase II subfamily.

Its subcellular location is the cytoplasm. It carries out the reaction Exonucleolytic cleavage in the 3'- to 5'-direction to yield nucleoside 5'-phosphates.. In terms of biological role, involved in mRNA degradation. Hydrolyzes single-stranded polyribonucleotides processively in the 3' to 5' direction. The protein is Exoribonuclease 2 of Pectobacterium atrosepticum (strain SCRI 1043 / ATCC BAA-672) (Erwinia carotovora subsp. atroseptica).